Reading from the N-terminus, the 233-residue chain is Phosphoenolpyruvate guanylyltransferase 1 (233 aa).

Phosphoenolpyruvate-binding residues include Thr154, Gly171, and Ser174.

It belongs to the CofC family.

It carries out the reaction phosphoenolpyruvate + GTP + H(+) = enolpyruvoyl-2-diphospho-5'-guanosine + diphosphate. Its pathway is cofactor biosynthesis; coenzyme F420 biosynthesis. Guanylyltransferase that catalyzes the activation of phosphoenolpyruvate (PEP) as enolpyruvoyl-2-diphospho-5'-guanosine, via the condensation of PEP with GTP. It is involved in the biosynthesis of coenzyme F420, a hydride carrier cofactor. In Rhodococcus jostii (strain RHA1), this protein is Phosphoenolpyruvate guanylyltransferase 1.